Here is a 600-residue protein sequence, read N- to C-terminus: UvrABC system protein C (600 aa).

One can recognise a GIY-YIG domain in the interval 15–100; sequence NSAGVYQYFN…IKQLHPKYNI (86 aa). The UVR domain occupies 203-238; it reads SILIKNLEKQMLVLAQNENYEEAAKVRDQIVTIKDL.

Belongs to the UvrC family. As to quaternary structure, interacts with UvrB in an incision complex.

The protein localises to the cytoplasm. The UvrABC repair system catalyzes the recognition and processing of DNA lesions. UvrC both incises the 5' and 3' sides of the lesion. The N-terminal half is responsible for the 3' incision and the C-terminal half is responsible for the 5' incision. The chain is UvrABC system protein C from Campylobacter jejuni subsp. jejuni serotype O:6 (strain 81116 / NCTC 11828).